The chain runs to 395 residues: 8-amino-7-oxononanoate synthase (395 aa).

Lysine 24 lines the substrate pocket. 111–112 (GF) provides a ligand contact to pyridoxal 5'-phosphate. Histidine 136 contacts substrate. Pyridoxal 5'-phosphate-binding positions include serine 184, 209 to 212 (DDAH), and 240 to 243 (TLSK). Position 243 is an N6-(pyridoxal phosphate)lysine (lysine 243). Threonine 357 contacts substrate.

It belongs to the class-II pyridoxal-phosphate-dependent aminotransferase family. BioF subfamily. Homodimer. The cofactor is pyridoxal 5'-phosphate.

The catalysed reaction is 6-carboxyhexanoyl-[ACP] + L-alanine + H(+) = (8S)-8-amino-7-oxononanoate + holo-[ACP] + CO2. It functions in the pathway cofactor biosynthesis; biotin biosynthesis. Its function is as follows. Catalyzes the decarboxylative condensation of pimeloyl-[acyl-carrier protein] and L-alanine to produce 8-amino-7-oxononanoate (AON), [acyl-carrier protein], and carbon dioxide. The polypeptide is 8-amino-7-oxononanoate synthase (Treponema denticola (strain ATCC 35405 / DSM 14222 / CIP 103919 / JCM 8153 / KCTC 15104)).